The following is a 186-amino-acid chain: Adenine phosphoribosyltransferase (186 aa).

The protein belongs to the purine/pyrimidine phosphoribosyltransferase family. As to quaternary structure, homodimer.

It is found in the cytoplasm. It catalyses the reaction AMP + diphosphate = 5-phospho-alpha-D-ribose 1-diphosphate + adenine. It participates in purine metabolism; AMP biosynthesis via salvage pathway; AMP from adenine: step 1/1. In terms of biological role, catalyzes a salvage reaction resulting in the formation of AMP, that is energically less costly than de novo synthesis. The sequence is that of Adenine phosphoribosyltransferase from Sulfurovum sp. (strain NBC37-1).